Here is a 360-residue protein sequence, read N- to C-terminus: Phenylalanine--tRNA ligase alpha subunit (360 aa).

E260 lines the Mg(2+) pocket.

It belongs to the class-II aminoacyl-tRNA synthetase family. Phe-tRNA synthetase alpha subunit type 1 subfamily. In terms of assembly, tetramer of two alpha and two beta subunits. It depends on Mg(2+) as a cofactor.

It localises to the cytoplasm. The enzyme catalyses tRNA(Phe) + L-phenylalanine + ATP = L-phenylalanyl-tRNA(Phe) + AMP + diphosphate + H(+). The protein is Phenylalanine--tRNA ligase alpha subunit of Rhodopseudomonas palustris (strain BisB5).